Reading from the N-terminus, the 466-residue chain is Asparagine--tRNA ligase (466 aa).

It belongs to the class-II aminoacyl-tRNA synthetase family. As to quaternary structure, homodimer.

The protein resides in the cytoplasm. The catalysed reaction is tRNA(Asn) + L-asparagine + ATP = L-asparaginyl-tRNA(Asn) + AMP + diphosphate + H(+). The sequence is that of Asparagine--tRNA ligase from Sodalis glossinidius (strain morsitans).